Here is a 506-residue protein sequence, read N- to C-terminus: MGEVILSMTNIHKAFGPVRALRSAALELQRGEIHALAGENGAGKSTLMHIIDGILQPDGGEILLDGKPVRISSPNAANRLGIGFVHQEIALCPEISVAENMYMSETGQSRSWFMNYRDLEKRAATVLREIGDIDPTHRAGDLSISQQQIVEIAKALTLDCRILILDEPTAALTETEAQTLFKIMRRLAARGIAIIYISHRMAEIFEHCDRITVMRDGCHIRTENIADISPEEVVNSMVGRVLDKLYPPKLADDEKSNEVILSVRGLNEGKRVFDVDFDLRRGEILGFAGLIGAGRSEIARAVCRLEGKPKGEVVLRGRSLKLRDYRDSIREGIVYLSEDRKGDGLFLNMSIATNVSALDIGRISNGMGFIQRRKEMKRADELGRRLKLRANSVGDAVSTLSGGNQQKVALAKMLSVEPEVIFLDEPTRGVDVGAKAEIHRQIRELARQGVGVVVISSELPELIGVSDRVLVVREGRITGEVEGDDMTEEKIMQLASITIMQNAAEA.

ABC transporter domains follow at residues Leu6 to Val241 and Glu254 to Ile499. Gly38 to Ser45 provides a ligand contact to ATP.

The protein belongs to the ABC transporter superfamily. Ribose importer (TC 3.A.1.2.1) family. The complex is composed of an ATP-binding protein (RbsA), two transmembrane proteins (RbsC) and a solute-binding protein (RbsB).

Its subcellular location is the cell inner membrane. It catalyses the reaction D-ribose(out) + ATP + H2O = D-ribose(in) + ADP + phosphate + H(+). Part of the ABC transporter complex RbsABC involved in ribose import. Responsible for energy coupling to the transport system. The chain is Ribose import ATP-binding protein RbsA 2 from Agrobacterium fabrum (strain C58 / ATCC 33970) (Agrobacterium tumefaciens (strain C58)).